The chain runs to 381 residues: E3 ubiquitin-protein ligase RNF133 (381 aa).

One can recognise a PA domain in the interval 65–167; sequence SSILKRVAGV…VKGMEILHLI (103 aa). The helical transmembrane segment at 186 to 208 threads the bilayer; sequence WLNHYFVSFMIVTTATLAYFTFY. Residues 256 to 297 form an RING-type; atypical zinc finger; sequence CVICFEAYKPNEIVRILTCKHFFHKNCIDPWILAHGTCPMCK. The tract at residues 340–381 is disordered; it reads LPPARTSSKVTHVQEHPTSVNVGSQPPEAEETGHPSFGQHDL. The span at 344–363 shows a compositional bias: polar residues; sequence RTSSKVTHVQEHPTSVNVGS.

In terms of assembly, interacts with E3 ligase UBE2J1. Post-translationally, auto-ubiquitinated.

The protein localises to the endoplasmic reticulum membrane. It carries out the reaction S-ubiquitinyl-[E2 ubiquitin-conjugating enzyme]-L-cysteine + [acceptor protein]-L-lysine = [E2 ubiquitin-conjugating enzyme]-L-cysteine + N(6)-ubiquitinyl-[acceptor protein]-L-lysine.. It participates in protein modification; protein ubiquitination. Functionally, has E3 ubiquitin-protein ligase activity. Plays a role in male fecundity through the interaction with the E2 ubituitin-protein ligase UBE2J1. The chain is E3 ubiquitin-protein ligase RNF133 (Rnf133) from Rattus norvegicus (Rat).